We begin with the raw amino-acid sequence, 210 residues long: Large ribosomal subunit protein uL3 (210 aa).

The protein belongs to the universal ribosomal protein uL3 family. Part of the 50S ribosomal subunit. Forms a cluster with proteins L14 and L19.

In terms of biological role, one of the primary rRNA binding proteins, it binds directly near the 3'-end of the 23S rRNA, where it nucleates assembly of the 50S subunit. The sequence is that of Large ribosomal subunit protein uL3 from Geobacter sulfurreducens (strain ATCC 51573 / DSM 12127 / PCA).